A 151-amino-acid polypeptide reads, in one-letter code: Ubiquitin-conjugating enzyme E2 2 (151 aa).

The interval 1 to 26 is disordered; that stretch reads MSTSARRRLMRDFKRMQTDPPAGVSA. Positions 4–150 constitute a UBC core domain; it reads SARRRLMRDF…VRETVEKSWE (147 aa). The active-site Glycyl thioester intermediate is the cysteine 88.

This sequence belongs to the ubiquitin-conjugating enzyme family.

It localises to the cytoplasm. Its subcellular location is the nucleus. The enzyme catalyses S-ubiquitinyl-[E1 ubiquitin-activating enzyme]-L-cysteine + [E2 ubiquitin-conjugating enzyme]-L-cysteine = [E1 ubiquitin-activating enzyme]-L-cysteine + S-ubiquitinyl-[E2 ubiquitin-conjugating enzyme]-L-cysteine.. Its pathway is protein modification; protein ubiquitination. Its function is as follows. Catalyzes the covalent attachment of ubiquitin to other proteins. Plays a role in transcription regulation by catalyzing the monoubiquitination of histone H2B to form H2BK123ub1. H2BK123ub1 gives a specific tag for epigenetic transcriptional activation and is also a prerequisite for H3K4me and H3K79me formation. Also involved in postreplication repair of UV-damaged DNA, in N-end rule-dependent protein degradation and in sporulation. This is Ubiquitin-conjugating enzyme E2 2 (ubc2) from Aspergillus fumigatus (strain ATCC MYA-4609 / CBS 101355 / FGSC A1100 / Af293) (Neosartorya fumigata).